A 514-amino-acid chain; its full sequence is Peptide chain release factor 3 (514 aa).

Residues 8–268 (KKRRTFAIIS…IFLKFAPEPH (261 aa)) form the tr-type G domain. GTP is bound by residues 17–24 (SHPDAGKT), 85–89 (DTPGH), and 139–142 (NKLD).

This sequence belongs to the TRAFAC class translation factor GTPase superfamily. Classic translation factor GTPase family. PrfC subfamily.

The protein localises to the cytoplasm. Functionally, increases the formation of ribosomal termination complexes and stimulates activities of RF-1 and RF-2. It binds guanine nucleotides and has strong preference for UGA stop codons. It may interact directly with the ribosome. The stimulation of RF-1 and RF-2 is significantly reduced by GTP and GDP, but not by GMP. This is Peptide chain release factor 3 from Streptococcus pneumoniae (strain P1031).